The chain runs to 370 residues: Aminomethyltransferase (370 aa).

This sequence belongs to the GcvT family. In terms of assembly, the glycine cleavage system is composed of four proteins: P, T, L and H.

The catalysed reaction is N(6)-[(R)-S(8)-aminomethyldihydrolipoyl]-L-lysyl-[protein] + (6S)-5,6,7,8-tetrahydrofolate = N(6)-[(R)-dihydrolipoyl]-L-lysyl-[protein] + (6R)-5,10-methylene-5,6,7,8-tetrahydrofolate + NH4(+). The glycine cleavage system catalyzes the degradation of glycine. In Clostridium botulinum (strain ATCC 19397 / Type A), this protein is Aminomethyltransferase.